Consider the following 178-residue polypeptide: Mediator of RNA polymerase II transcription subunit 30 (178 aa).

Residues 1-22 (MSTPPLAPTGMASGPFGGPQAQ) are disordered. The residue at position 2 (Ser-2) is an N-acetylserine. Residues 134-173 (FASEERREIVEVNKKLKQKNQQLKQIMDQLRNLIWDINAM) adopt a coiled-coil conformation.

Belongs to the Mediator complex subunit 30 family. As to quaternary structure, component of the Mediator complex, which is composed of MED1, MED4, MED6, MED7, MED8, MED9, MED10, MED11, MED12, MED13, MED13L, MED14, MED15, MED16, MED17, MED18, MED19, MED20, MED21, MED22, MED23, MED24, MED25, MED26, MED27, MED29, MED30, MED31, CCNC, CDK8 and CDC2L6/CDK11. The MED12, MED13, CCNC and CDK8 subunits form a distinct module termed the CDK8 module. Mediator containing the CDK8 module is less active than Mediator lacking this module in supporting transcriptional activation. Individual preparations of the Mediator complex lacking one or more distinct subunits have been variously termed ARC, CRSP, DRIP, PC2, SMCC and TRAP.

The protein resides in the nucleus. Its function is as follows. Component of the Mediator complex, a coactivator involved in the regulated transcription of nearly all RNA polymerase II-dependent genes. Mediator functions as a bridge to convey information from gene-specific regulatory proteins to the basal RNA polymerase II transcription machinery. Mediator is recruited to promoters by direct interactions with regulatory proteins and serves as a scaffold for the assembly of a functional preinitiation complex with RNA polymerase II and the general transcription factors. This is Mediator of RNA polymerase II transcription subunit 30 (Med30) from Mus musculus (Mouse).